Consider the following 436-residue polypeptide: uncharacterized protein (436 aa).

Positions 1-19 (MKKLLLASIIGLASTTSFA) are cleaved as a signal peptide.

This is an uncharacterized protein from Rickettsia bellii (strain RML369-C).